Consider the following 551-residue polypeptide: ATP-dependent RNA helicase MRH4, mitochondrial (551 aa).

The N-terminal 13 residues, 1-13, are a transit peptide targeting the mitochondrion; it reads MPPNLTPRSFNRD. The Q motif motif lies at 43–73; the sequence is RTFDDFGLEEGLVKSLKGLYGEDGKTTPIET. The region spanning 85-293 is the Helicase ATP-binding domain; that stretch reads ASAPIGSQRV…TTNPFFTKKE (209 aa). An ATP-binding site is contributed by 98 to 105; sequence AETGSGKT. The short motif at 242–245 is the DEAD box element; it reads DEAD. The Helicase C-terminal domain occupies 334-551; that stretch reads TLAEDAKAAK…VGAMGKRVRT (218 aa). Residues 504–527 are disordered; sequence LGEGAKNNKGGKGQGPLKKDGKTA.

Belongs to the DEAD box helicase family. MRH4 subfamily.

The protein resides in the mitochondrion. The catalysed reaction is ATP + H2O = ADP + phosphate + H(+). Its function is as follows. ATP-binding RNA helicase involved in mitochondrial RNA metabolism. Required for maintenance of mitochondrial DNA. This Cryptococcus neoformans var. neoformans serotype D (strain B-3501A) (Filobasidiella neoformans) protein is ATP-dependent RNA helicase MRH4, mitochondrial (MRH4).